Here is a 2609-residue protein sequence, read N- to C-terminus: Mycosubtilin synthase subunit C (2609 aa).

Residues 258-1628 (PREKTIHQLF…RVCAQPEMTV (1371 aa)) form a domain 1 (D-serine-activating) region. The tract at residues 288–695 (TYQELNEKAN…HIPSIQESIV (408 aa)) is adenylation 1. In terms of domain architecture, Carrier 1 spans 771 to 845 (APRTELEKIL…ELVPYVEPVT (75 aa)). Ser806 bears the O-(pantetheine 4'-phosphoryl)serine mark. The tract at residues 853-1312 (IKGPALLTPI…EISIDELDQF (460 aa)) is epimerization 1. A condensation 1 region spans residues 1322-1623 (IENIYPLTPM…NTIPVRVCAQ (302 aa)). Residues 1778–2359 (PKEKTIYQLF…AHAIQAAALP (582 aa)) form a domain 2 (isoleucine-activating) region. The adenylation 2 stretch occupies residues 1808 to 2205 (TYRQLNEQAN…LVESVKEAVV (398 aa)). A Carrier 2 domain is found at 2282 to 2357 (APRTLIEKQL…TMAHAIQAAA (76 aa)). At Ser2317 the chain carries O-(pantetheine 4'-phosphoryl)serine. A thioesterase region spans residues 2375–2581 (IPVFCFPPLI…ENMSTIRSIM (207 aa)).

Belongs to the ATP-dependent AMP-binding enzyme family. Pantetheine 4'-phosphate is required as a cofactor.

In terms of biological role, this protein is a multifunctional enzyme, able to activate and polymerize the amino acids Ser and Asn as part of the synthesis of mycosubtilin. The Ser residue is further epimerized to the D-isomer form. The activation sites for these amino acids consist of individual domains. The protein is Mycosubtilin synthase subunit C (mycC) of Bacillus subtilis.